A 424-amino-acid chain; its full sequence is Protein shisa-9 (424 aa).

A signal peptide spans 1 to 23; the sequence is MRRVLRLLLGCFLTELCARMCRA. The Extracellular portion of the chain corresponds to 24-149; the sequence is QERSGHGQLA…DPLHDPTKDK (126 aa). Asn45, Asn89, and Asn116 each carry an N-linked (GlcNAc...) asparagine glycan. Residues 150–170 form a helical membrane-spanning segment; sequence TNLIVYIICGVVAVMVLVGIF. Over 171 to 424 the chain is Cytoplasmic; the sequence is TKLGLEKAHR…ITNSKTEVTV (254 aa). Disordered stretches follow at residues 333-373 and 389-424; these read PRAF…TWDP and LGIA…EVTV. Polar residues-rich tracts occupy residues 362 to 373 and 402 to 424; these read YNSTANFKTWDP and TRTQ…EVTV.

This sequence belongs to the shisa family. SHISA9 subfamily. As to quaternary structure, component of some AMPA receptors (ionotropic glutamate receptors) complex, at least composed of some AMPA receptor (GRIA1, GRIA2 and/or GRIA3), CACNG2 and SHISA9, as well as low level of DLG4. As to expression, brain-specific. Mainly expressed in neurons, including in hippocampus, cerebral cortex, striatum, thalamus, olfactory bulb and cerebellum. Expressed in most brain structures during embryonic and postnatal development.

The protein resides in the cell projection. The protein localises to the dendritic spine membrane. Its subcellular location is the synapse. Regulator of short-term neuronal synaptic plasticity in the dentate gyrus. Associates with AMPA receptors (ionotropic glutamate receptors) in synaptic spines and promotes AMPA receptor desensitization at excitatory synapses. The polypeptide is Protein shisa-9 (Shisa9) (Mus musculus (Mouse)).